The chain runs to 396 residues: Ribosomal RNA large subunit methyltransferase I (396 aa).

The PUA domain maps to 2–81 (SVRLVLAKGR…ESIDIAFFSR (80 aa)).

The protein belongs to the methyltransferase superfamily. RlmI family.

The protein localises to the cytoplasm. The catalysed reaction is cytidine(1962) in 23S rRNA + S-adenosyl-L-methionine = 5-methylcytidine(1962) in 23S rRNA + S-adenosyl-L-homocysteine + H(+). Specifically methylates the cytosine at position 1962 (m5C1962) of 23S rRNA. The chain is Ribosomal RNA large subunit methyltransferase I from Shigella flexneri serotype 5b (strain 8401).